A 1271-amino-acid polypeptide reads, in one-letter code: Period circadian protein (1271 aa).

Over residues 1–14 (MEGESTESTQNTKV) the composition is skewed to polar residues. The segment at 1-102 (MEGESTESTQ…AEEQPHSSGT (102 aa)) is disordered. Low complexity predominate over residues 15–46 (SDSAYSNSCSNSQSQRSGSSKSMLSGSHSSGS). The Nuclear localization signal signature appears at 65 to 78 (KRNKEKSRKKKKAK). The segment covering 65–78 (KRNKEKSRKKKKAK) has biased composition (basic residues). Residues 80 to 90 (TQAQATISSSL) are compositionally biased toward polar residues. 2 consecutive PAS domains span residues 189–259 (TGPA…IPIA) and 339–409 (YRVP…MKKG). The disordered stretch occupies residues 596 to 660 (APVEVDPPKV…TNTSNAGTGT (65 aa)). 3 tandem repeats follow at residues 657-658 (GT), 659-660 (GT), and 661-662 (GT). An 8 X 2 AA approximate tandem repeats of G-T region spans residues 657–677 (GTGTGTVTGTGTIIATSGTGT). The stretch at 663 to 664 (VT) is one 4; approximate repeat. 4 consecutive repeat copies span residues 665 to 666 (GT), 667 to 668 (GT), 674 to 675 (GT), and 676 to 677 (GT). Polar residues-rich tracts occupy residues 746–772 (GAEN…NSAA) and 781–803 (GPDN…SGAE). Disordered regions lie at residues 746–913 (GAEN…VEKN), 928–956 (EYSS…PKQQ), 1014–1050 (PAPG…QQAA), 1143–1191 (TPAQ…NSNQ), and 1227–1271 (KTTD…HGDG). Basic and acidic residues-rich tracts occupy residues 805-822 (SRAE…HPRP) and 831-841 (RPDKTGPDKSG). Residues 864–884 (QDTRTTAGTPDSPPVSLTESL) are compositionally biased toward polar residues. 2 stretches are compositionally biased toward basic and acidic residues: residues 885–896 (LNKHNDEMEKFM) and 903–913 (SRGDRRTVEKN). Residues 1014 to 1023 (PAPGALSPTP) are compositionally biased toward low complexity. Over residues 1025-1036 (NQKHHHHAHQHA) the composition is skewed to basic residues. The span at 1143-1167 (TPAQLQRPSSQDTSVKTEPASNATP) shows a compositional bias: polar residues. Basic and acidic residues predominate over residues 1257 to 1271 (IMEHPEEDQTQHGDG).

In terms of assembly, forms a heterodimer with timeless (TIM); the complex then translocates into the nucleus. Phosphorylated with a circadian rhythmicity, probably by the double-time protein (dbt). Phosphorylation could be implicated in the stability of per monomer and in the formation of heterodimer per-tim.

Its subcellular location is the nucleus. The protein resides in the cytoplasm. It is found in the perinuclear region. Its function is as follows. Essential for biological clock functions. Determines the period length of circadian and ultradian rhythms; an increase in PER dosage leads to shortened circadian rhythms and a decrease leads to lengthened circadian rhythms. Essential for the circadian rhythmicity of locomotor activity, eclosion behavior, and for the rhythmic component of the male courtship song that originates in the thoracic nervous system. The biological cycle depends on the rhythmic formation and nuclear localization of the TIM-PER complex. Light induces the degradation of TIM, which promotes elimination of PER. Nuclear activity of the heterodimer coordinatively regulates PER and TIM transcription through a negative feedback loop. Behaves as a negative element in circadian transcriptional loop. Does not appear to bind DNA, suggesting indirect transcriptional inhibition. The protein is Period circadian protein (per) of Drosophila pseudoobscura pseudoobscura (Fruit fly).